Consider the following 134-residue polypeptide: Probable glycine cleavage system H protein (134 aa).

One can recognise a Lipoyl-binding domain in the interval 29–110 (TVLVGITDYA…PYEAWIAKIK (82 aa)). Lysine 70 carries the post-translational modification N6-lipoyllysine.

This sequence belongs to the GcvH family. As to quaternary structure, the glycine cleavage system is composed of four proteins: P, T, L and H. (R)-lipoate is required as a cofactor.

In terms of biological role, the glycine cleavage system catalyzes the degradation of glycine. The H protein shuttles the methylamine group of glycine from the P protein to the T protein. This chain is Probable glycine cleavage system H protein, found in Pyrococcus furiosus (strain ATCC 43587 / DSM 3638 / JCM 8422 / Vc1).